Consider the following 691-residue polypeptide: Zinc finger protein 770 (691 aa).

A Glycyl lysine isopeptide (Lys-Gly) (interchain with G-Cter in SUMO2) cross-link involves residue lysine 11. 3 C2H2-type zinc fingers span residues 27–49, 55–77, and 81–103; these read YVCNICFKHFETPSKLARHYLIH, FECDVCHKTFRQLVHLERHQLTH, and FKCSICQRHFKNLKTFVKHQQLH. Glycyl lysine isopeptide (Lys-Gly) (interchain with G-Cter in SUMO2) cross-links involve residues lysine 112, lysine 121, and lysine 146. 3 consecutive C2H2-type zinc fingers follow at residues 160 to 182, 188 to 210, and 216 to 238; these read HACTICGKMFPSQSKLDRHVLIH, FKCVLCTKSFRQSTHLKIHQLTH, and FQCCFCQKGFKIQSKLLKHKQIH. Positions 258-277 are disordered; that stretch reads PLPNKLNANQGGFENGEIGE. A Glycyl lysine isopeptide (Lys-Gly) (interchain with G-Cter in SUMO2) cross-link involves residue lysine 262. The C2H2-type 7; degenerate zinc-finger motif lies at 294–318; the sequence is FQCPKCEKCFESEQILNEHSCFAAR. Residues lysine 420 and lysine 437 each participate in a glycyl lysine isopeptide (Lys-Gly) (interchain with G-Cter in SUMO2) cross-link. 4 consecutive C2H2-type zinc fingers follow at residues 475 to 497, 503 to 525, 625 to 647, and 653 to 675; these read CPCDKCEKVFPSISKLKRHYLIH, FGCNICGKSFRQSAHLKRHEQTH, YRCSVCAKSFRSPSKLERHYLIH, and FECSVCGKTFRQAPHWKRHQLTH. Lysine 683 is covalently cross-linked (Glycyl lysine isopeptide (Lys-Gly) (interchain with G-Cter in SUMO2)).

It belongs to the krueppel C2H2-type zinc-finger protein family.

The protein resides in the nucleus. In terms of biological role, may be involved in transcriptional regulation. This Homo sapiens (Human) protein is Zinc finger protein 770 (ZNF770).